The primary structure comprises 606 residues: Phosphomethylpyrimidine synthase (606 aa).

The tract at residues 84–103 (EPYPARSVKPEDNGLTSSPI) is disordered. Substrate is bound by residues asparagine 209, methionine 238, tyrosine 267, histidine 303, 323–325 (SRG), 364–367 (DGLR), and glutamate 403. Residue histidine 407 coordinates Zn(2+). Tyrosine 430 contacts substrate. Histidine 471 lines the Zn(2+) pocket. Cysteine 551, cysteine 554, and cysteine 559 together coordinate [4Fe-4S] cluster.

Belongs to the ThiC family. In terms of assembly, homodimer. The cofactor is [4Fe-4S] cluster.

It catalyses the reaction 5-amino-1-(5-phospho-beta-D-ribosyl)imidazole + S-adenosyl-L-methionine = 4-amino-2-methyl-5-(phosphooxymethyl)pyrimidine + CO + 5'-deoxyadenosine + formate + L-methionine + 3 H(+). It functions in the pathway cofactor biosynthesis; thiamine diphosphate biosynthesis. In terms of biological role, catalyzes the synthesis of the hydroxymethylpyrimidine phosphate (HMP-P) moiety of thiamine from aminoimidazole ribotide (AIR) in a radical S-adenosyl-L-methionine (SAM)-dependent reaction. This chain is Phosphomethylpyrimidine synthase, found in Bartonella tribocorum (strain CIP 105476 / IBS 506).